We begin with the raw amino-acid sequence, 97 residues long: Acylphosphatase (97 aa).

The 87-residue stretch at 9–95 (TRHLRIHGLV…CDAQGFEQRE (87 aa)) folds into the Acylphosphatase-like domain. Residues arginine 24 and asparagine 42 contribute to the active site.

The protein belongs to the acylphosphatase family.

It catalyses the reaction an acyl phosphate + H2O = a carboxylate + phosphate + H(+). This Acidovorax sp. (strain JS42) protein is Acylphosphatase (acyP).